The sequence spans 366 residues: Molybdenum import ATP-binding protein ModC (366 aa).

The region spanning 1–231 is the ABC transporter domain; it reads MSEVILQLQK…KAMRPWQSFS (231 aa). 33–40 is an ATP binding site; the sequence is GRSGAGKT. In terms of domain architecture, Mop spans 292-361; it reads ASSIRNILPA…IKGVSVAQRD (70 aa).

It belongs to the ABC transporter superfamily. Molybdate importer (TC 3.A.1.8) family. As to quaternary structure, the complex is composed of two ATP-binding proteins (ModC), two transmembrane proteins (ModB) and a solute-binding protein (ModA).

The protein resides in the cell inner membrane. The enzyme catalyses molybdate(out) + ATP + H2O = molybdate(in) + ADP + phosphate + H(+). Part of the ABC transporter complex ModABC involved in molybdenum import. Responsible for energy coupling to the transport system. The polypeptide is Molybdenum import ATP-binding protein ModC (Vibrio cholerae serotype O1 (strain ATCC 39315 / El Tor Inaba N16961)).